Here is a 103-residue protein sequence, read N- to C-terminus: A-type ATP synthase subunit F (103 aa).

This sequence belongs to the V-ATPase F subunit family. In terms of assembly, has multiple subunits with at least A(3), B(3), C, D, E, F, H, I and proteolipid K(x).

The protein resides in the cell membrane. Its function is as follows. Component of the A-type ATP synthase that produces ATP from ADP in the presence of a proton gradient across the membrane. The protein is A-type ATP synthase subunit F of Pyrococcus abyssi (strain GE5 / Orsay).